The primary structure comprises 542 residues: CTP synthase (542 aa).

The amidoligase domain stretch occupies residues Met-1–Ile-265. Ser-13 is a CTP binding site. Ser-13 lines the UTP pocket. Residue Ser-14–Ile-19 coordinates ATP. Residue Tyr-54 participates in L-glutamine binding. Asp-71 is an ATP binding site. Asp-71 and Glu-139 together coordinate Mg(2+). CTP-binding positions include Asp-146 to Glu-148, Lys-186 to Gln-191, and Lys-222. UTP-binding positions include Lys-186–Gln-191 and Lys-222. The Glutamine amidotransferase type-1 domain maps to Thr-291–Leu-541. Residue Gly-353 coordinates L-glutamine. Catalysis depends on Cys-380, which acts as the Nucleophile; for glutamine hydrolysis. L-glutamine contacts are provided by residues Phe-381–Gln-384, Glu-404, and Arg-469. Active-site residues include His-514 and Glu-516.

This sequence belongs to the CTP synthase family. As to quaternary structure, homotetramer.

The catalysed reaction is UTP + L-glutamine + ATP + H2O = CTP + L-glutamate + ADP + phosphate + 2 H(+). It carries out the reaction L-glutamine + H2O = L-glutamate + NH4(+). The enzyme catalyses UTP + NH4(+) + ATP = CTP + ADP + phosphate + 2 H(+). The protein operates within pyrimidine metabolism; CTP biosynthesis via de novo pathway; CTP from UDP: step 2/2. Allosterically activated by GTP, when glutamine is the substrate; GTP has no effect on the reaction when ammonia is the substrate. The allosteric effector GTP functions by stabilizing the protein conformation that binds the tetrahedral intermediate(s) formed during glutamine hydrolysis. Inhibited by the product CTP, via allosteric rather than competitive inhibition. Its function is as follows. Catalyzes the ATP-dependent amination of UTP to CTP with either L-glutamine or ammonia as the source of nitrogen. Regulates intracellular CTP levels through interactions with the four ribonucleotide triphosphates. This is CTP synthase from Chelativorans sp. (strain BNC1).